The primary structure comprises 445 residues: 3-phosphoshikimate 1-carboxyvinyltransferase (445 aa).

Residues 1 to 20 (MSSTHPGRTIRSGATQNLSG) are compositionally biased toward polar residues. Residues 1–24 (MSSTHPGRTIRSGATQNLSGTIRP) form a disordered region. 3-phosphoshikimate is bound by residues K28, S29, and R33. K28 provides a ligand contact to phosphoenolpyruvate. G101 and R129 together coordinate phosphoenolpyruvate. 3-phosphoshikimate is bound by residues S174, Q176, D322, and K349. Q176 lines the phosphoenolpyruvate pocket. D322 functions as the Proton acceptor in the catalytic mechanism. Residues R353 and R397 each contribute to the phosphoenolpyruvate site.

This sequence belongs to the EPSP synthase family. Monomer.

The protein localises to the cytoplasm. It carries out the reaction 3-phosphoshikimate + phosphoenolpyruvate = 5-O-(1-carboxyvinyl)-3-phosphoshikimate + phosphate. It participates in metabolic intermediate biosynthesis; chorismate biosynthesis; chorismate from D-erythrose 4-phosphate and phosphoenolpyruvate: step 6/7. Catalyzes the transfer of the enolpyruvyl moiety of phosphoenolpyruvate (PEP) to the 5-hydroxyl of shikimate-3-phosphate (S3P) to produce enolpyruvyl shikimate-3-phosphate and inorganic phosphate. In Magnetococcus marinus (strain ATCC BAA-1437 / JCM 17883 / MC-1), this protein is 3-phosphoshikimate 1-carboxyvinyltransferase.